The following is a 459-amino-acid chain: ATP-dependent protease ATPase subunit HslU (459 aa).

ATP-binding positions include Val26, 68–73, Asp271, Glu337, and Arg409; that span reads GVGKTE.

This sequence belongs to the ClpX chaperone family. HslU subfamily. In terms of assembly, a double ring-shaped homohexamer of HslV is capped on each side by a ring-shaped HslU homohexamer. The assembly of the HslU/HslV complex is dependent on binding of ATP.

The protein localises to the cytoplasm. Functionally, ATPase subunit of a proteasome-like degradation complex; this subunit has chaperone activity. The binding of ATP and its subsequent hydrolysis by HslU are essential for unfolding of protein substrates subsequently hydrolyzed by HslV. HslU recognizes the N-terminal part of its protein substrates and unfolds these before they are guided to HslV for hydrolysis. This chain is ATP-dependent protease ATPase subunit HslU, found in Xylella fastidiosa (strain M12).